The following is a 218-amino-acid chain: NAD(P)H-quinone oxidoreductase subunit I (218 aa).

2 4Fe-4S ferredoxin-type domains span residues 55–84 and 95–124; these read GRIH…VDWV and RNYS…MTEE. Cys-64, Cys-67, Cys-70, Cys-74, Cys-104, Cys-107, Cys-110, and Cys-114 together coordinate [4Fe-4S] cluster. The tract at residues 179 to 218 is disordered; the sequence is LRAGKLPSQIIKELQADKSEEEGKNNSSDMVPNKLNSTNK. A compositionally biased stretch (basic and acidic residues) spans 192–202; it reads LQADKSEEEGK. Residues 203–218 are compositionally biased toward polar residues; it reads NNSSDMVPNKLNSTNK.

This sequence belongs to the complex I 23 kDa subunit family. NDH-1 is composed of at least 11 different subunits. The cofactor is [4Fe-4S] cluster.

Its subcellular location is the cellular thylakoid membrane. It carries out the reaction a plastoquinone + NADH + (n+1) H(+)(in) = a plastoquinol + NAD(+) + n H(+)(out). The catalysed reaction is a plastoquinone + NADPH + (n+1) H(+)(in) = a plastoquinol + NADP(+) + n H(+)(out). In terms of biological role, NDH-1 shuttles electrons from an unknown electron donor, via FMN and iron-sulfur (Fe-S) centers, to quinones in the respiratory and/or the photosynthetic chain. The immediate electron acceptor for the enzyme in this species is believed to be plastoquinone. Couples the redox reaction to proton translocation, and thus conserves the redox energy in a proton gradient. The polypeptide is NAD(P)H-quinone oxidoreductase subunit I (Prochlorococcus marinus (strain NATL2A)).